The chain runs to 397 residues: Zinc finger CCCH domain-containing protein 33 (397 aa).

C3H1-type zinc fingers lie at residues 40 to 68 (RPGE…HPRD), 85 to 113 (RIGQ…HPRN), 131 to 159 (RSNE…HPQP), 274 to 302 (RPGQ…HPRD), and 320 to 348 (RPGE…HPMR). Positions 361-397 (EVVETSTGKSRRLSVSETRQAATTSSGKDTTIDNTQQ) are disordered. Residues 364-397 (ETSTGKSRRLSVSETRQAATTSSGKDTTIDNTQQ) show a composition bias toward polar residues.

Its subcellular location is the nucleus. In Arabidopsis thaliana (Mouse-ear cress), this protein is Zinc finger CCCH domain-containing protein 33 (ZFN1).